The primary structure comprises 576 residues: Proline--tRNA ligase (576 aa).

It belongs to the class-II aminoacyl-tRNA synthetase family. ProS type 1 subfamily. As to quaternary structure, homodimer.

The protein localises to the cytoplasm. The enzyme catalyses tRNA(Pro) + L-proline + ATP = L-prolyl-tRNA(Pro) + AMP + diphosphate. Functionally, catalyzes the attachment of proline to tRNA(Pro) in a two-step reaction: proline is first activated by ATP to form Pro-AMP and then transferred to the acceptor end of tRNA(Pro). As ProRS can inadvertently accommodate and process non-cognate amino acids such as alanine and cysteine, to avoid such errors it has two additional distinct editing activities against alanine. One activity is designated as 'pretransfer' editing and involves the tRNA(Pro)-independent hydrolysis of activated Ala-AMP. The other activity is designated 'posttransfer' editing and involves deacylation of mischarged Ala-tRNA(Pro). The misacylated Cys-tRNA(Pro) is not edited by ProRS. This chain is Proline--tRNA ligase, found in Bordetella bronchiseptica (strain ATCC BAA-588 / NCTC 13252 / RB50) (Alcaligenes bronchisepticus).